Consider the following 257-residue polypeptide: MLNIIHRLKSGMFPALFFLTSASVLAHPLTIPPGHWLEGMAVGVTELSGTLYVRDVSWQWQPRAVRMSSPDAVQAGLAAGKGGMVSESRRGQDFYILGGHTTSLTTARSGLQPSVTLLQVAPSSPRIAARGELARGQVRYGEITFTLRHLLAWQDNITGGQGWSVVSGEVTPEAEKQVKRQLWQVNGYEWTPDYAGLTARPDAFISGAESLLSQENGSQHIAGAWVTSLSDVRVNFPGAEEPVKRWQGNLTPVVVYF.

The N-terminal stretch at 1 to 26 is a signal peptide; that stretch reads MLNIIHRLKSGMFPALFFLTSASVLA.

The protein localises to the fimbrium. K88 minor fimbrial subunit, plays an essential role in the biogenesis of the K88 fimbriae. Fimbriae (also called pili), are polar filaments radiating from the surface of the bacterium to a length of 0.5-1.5 micrometers and numbering 100-300 per cell. They enable bacteria to colonize the epithelium of specific host organs. This Escherichia coli protein is K88 minor fimbrial subunit FaeJ (faeJ).